The primary structure comprises 982 residues: Zinc finger and BTB domain-containing protein 4 (982 aa).

Positions C30–G131 constitute a BTB domain. K40 participates in a covalent cross-link: Glycyl lysine isopeptide (Lys-Gly) (interchain with G-Cter in SUMO2). Residues T71 to R103 form a disordered region. Over residues S74–S89 the composition is skewed to low complexity. The interaction with CBFA2T3 stretch occupies residues V165–L324. Residues F210 to C232 form a C2H2-type 1; atypical zinc finger. The segment at R234–A255 is disordered. The segment covering A242–A255 has biased composition (gly residues). C2H2-type zinc fingers lie at residues Y285–H307, Y313–H335, and Y341–H364. S367 bears the Phosphoserine mark. The interval K404–Q578 is disordered. The span at S430–S446 shows a compositional bias: pro residues. The segment covering A467–G477 has biased composition (gly residues). 2 stretches are compositionally biased toward low complexity: residues S478–T488 and A507–T529. Residue K548 forms a Glycyl lysine isopeptide (Lys-Gly) (interchain with G-Cter in SUMO2) linkage. Residues G552 to R565 show a composition bias toward gly residues. K590 is covalently cross-linked (Glycyl lysine isopeptide (Lys-Gly) (interchain with G-Cter in SUMO2)). Residues R591–P600 show a composition bias toward basic and acidic residues. Disordered regions lie at residues R591 to H700, L715 to R738, Q759 to S839, and G854 to M880. Residues S604–E627 are compositionally biased toward acidic residues. Positions E628–L637 are enriched in basic and acidic residues. C2H2-type zinc fingers lie at residues H700–H722 and F739–H761. A phosphothreonine; by HIPK2 mark is found at T769 and T771. Positions S799–S820 are enriched in low complexity. A Phosphothreonine; by HIPK2 modification is found at T953.

Interacts with HIPK2. Interacts with CBFA2T3. Interacts with ZBTB38. In terms of processing, phosphorylated by HIPK2. This phosphorylation reduces stability and triggers ZBTB4 protein degradation in response to DNA damage. As to expression, expressed in adult and aged myogenic satellite cells.

Its subcellular location is the nucleus. It is found in the chromosome. In terms of biological role, transcriptional repressor with bimodal DNA-binding specificity. Represses transcription in a methyl-CpG-dependent manner. Binds with a higher affinity to methylated CpG dinucleotides in the consensus sequence 5'-CGCG-3' but can also bind to the non-methylated consensus sequence 5'-CTGCNA-3' also known as the consensus kaiso binding site (KBS). Can also bind specifically to a single methyl-CpG pair and can bind hemimethylated DNA but with a lower affinity compared to methylated DNA. Plays a role in postnatal myogenesis, may be involved in the regulation of satellite cells self-renewal. In Mus musculus (Mouse), this protein is Zinc finger and BTB domain-containing protein 4 (Zbtb4).